The sequence spans 377 residues: Transcription factor SOX-18 (377 aa).

Positions 1 to 76 (MQRSPPGYGA…GRGERQTADE (76 aa)) are disordered. 2 stretches are compositionally biased toward low complexity: residues 21-34 (AWAPGIGAAAEARG) and 41-52 (SPTSPASPSSLP). The HMG box DNA-binding region spans 79–147 (IRRPMNAFMV…QHLRDHPNYK (69 aa)). 2 interaction with DNA regions span residues 81–94 (RPMNAFMVWAKDER) and 105–117 (HNAVLSKMLGKAW). Residues 160–225 (RRLEPGLLLP…GLEPGEASFF (66 aa)) form an important for transcriptional activation region. The Sox C-terminal domain maps to 256–376 (GAPLAEALRT…SAVYYSACIS (121 aa)). A 9aaTAD motif is present at residues 318 to 326 (TEFDQYLNC).

As to quaternary structure, interacts (via C-terminus) with MEF2C (via MADS box). Detected in adult lung, heart and skeletal muscles.

It is found in the nucleus. Functionally, transcriptional activator that binds to the consensus sequence 5'-AACAAAG-3' in the promoter of target genes and plays an essential role in embryonic cardiovascular development and lymphangiogenesis. Activates transcription of PROX1 and other genes coding for lymphatic endothelial markers. Plays an essential role in triggering the differentiation of lymph vessels, but is not required for the maintenance of differentiated lymphatic endothelial cells. Plays an important role in postnatal angiogenesis, where it is functionally redundant with SOX17. Interaction with MEF2C enhances transcriptional activation. Besides, required for normal hair development. The sequence is that of Transcription factor SOX-18 (Sox18) from Mus musculus (Mouse).